The following is a 627-amino-acid chain: MAAATASSPATAAAANSDDEDNYEEYIPVAKRRAMEADRLRRLRLSKPAPPSSSAAEAASDLPPPPPPPPNQPSAGGGGGGLEASAKPSLLVKATQLKRAAPEVTHTEQLIMQEKEMIEHLSDRKTLMSVRELAKGITYSDPLKTGWKPPLRLRRMPRAKADELRRKWHILVDGDDVPPPARDFRDLRLPEPMLRKLREKGIVQPTPIQVQGLPVVLSGRDMIGIAFTGSGKTLVFVLPLIMVALQEEMMMPIVPGEGPFGMIICPSRELAKQTYDVIEQFLVPLKEAGYPEIRPLLCIGGVDMRAQLDVVKKGVHIVVATPGRLKDLLAKKKMNLDNCRYLTLDEADRLVDLGFEDDIREVFDHFKAQRQTLLFSATMPKKIQNFAKSALVKPVIVNVGRAGAANLDVIQEVEYVKEDARIIYLLECLQKTPPPVLVFCENKADVDYIHEYLLLKGVEAVAIHGGKDQEERENAIEFFKNGKKDVLVATDVASKGLDFPDIQHVINYDMPAEIENYVHRIGRTGRCGKTGIATTFINKNQTETTLLDLKHLLKEAKQRIPPVLAELNDPLEDEETMAKESGVKGCAYCGGLGHRVTDCPKLEHQKSMAIAGSRRDYYGGGGYRGEI.

Composition is skewed to low complexity over residues 1–15 and 52–61; these read MAAA…AAAA and SSSAAEAASD. 2 disordered regions span residues 1-23 and 40-85; these read MAAA…EDNY and LRRL…LEAS. Pro residues predominate over residues 62–72; it reads LPPPPPPPPNQ. The Q motif signature appears at 182–210; the sequence is RDFRDLRLPEPMLRKLREKGIVQPTPIQV. One can recognise a Helicase ATP-binding domain in the interval 213 to 397; sequence LPVVLSGRDM…KSALVKPVIV (185 aa). 226 to 233 contributes to the ATP binding site; it reads AFTGSGKT. The DEAD box motif lies at 345–348; the sequence is DEAD. The region spanning 408–568 is the Helicase C-terminal domain; that stretch reads DVIQEVEYVK…RIPPVLAELN (161 aa). The CCHC-type zinc finger occupies 584 to 601; the sequence is KGCAYCGGLGHRVTDCPK.

It belongs to the DEAD box helicase family. DDX41 subfamily.

The enzyme catalyses ATP + H2O = ADP + phosphate + H(+). The chain is DEAD-box ATP-dependent RNA helicase 35A from Oryza sativa subsp. japonica (Rice).